A 485-amino-acid polypeptide reads, in one-letter code: Hydrogenase transcriptional regulatory protein HoxA (485 aa).

The Response regulatory domain occupies 6–120 (TILVVDDEVR…QLVETVKEAV (115 aa)). Residue D54 is modified to 4-aspartylphosphate. The Sigma-54 factor interaction domain occupies 166 to 392 (STESPMHAVI…ELQNEIQRMA (227 aa)). ATP contacts are provided by residues 192–199 (GESGTGKE) and 264–273 (EIGETSPAFQ). The tract at residues 404–426 (PLLGRRNGKRSAPLPAHGRLNGS) is disordered. The H-T-H motif DNA-binding region spans 451–470 (NISRVASELGLSRVGLRNKL).

The protein resides in the cytoplasm. Probable member of the two-component regulatory system involved in the regulation of the hydrogenase activity. HoxA is probably phosphorylated by a sensory component (which could be HoxX) and then acts in conjunction with sigma-54 as a transcriptional activator. The sequence is that of Hydrogenase transcriptional regulatory protein HoxA (hoxA) from Bradyrhizobium diazoefficiens (strain JCM 10833 / BCRC 13528 / IAM 13628 / NBRC 14792 / USDA 110).